A 95-amino-acid polypeptide reads, in one-letter code: uncharacterized protein (95 aa).

Basic and acidic residues-rich tracts occupy residues 1-28 (MRRA…KERC) and 41-53 (DERV…KGRP). Positions 1–73 (MRRAEVKRSA…RTSRAGSSWQ (73 aa)) are disordered.

This is an uncharacterized protein from Homo sapiens (Human).